Here is a 2113-residue protein sequence, read N- to C-terminus: Unconventional myosin-VIIb (2113 aa).

Positions 65–760 constitute a Myosin motor domain; that stretch reads QGVDDMIRLG…QDTVLEIRRS (696 aa). 158-165 contacts ATP; it reads GESGAGKT. An actin-binding region spans residues 637–659; sequence LDQLMRILTNCQPYFVRCIKPNE. IQ domains lie at 745 to 765, 763 to 792, 786 to 815, 809 to 838, 832 to 861, and 855 to 884; these read IFLKDHQDTVLEIRRSQALDG, LDGAAIRIQRVLRGHKYRKEFLRQRRAAVT, QRRAAVTLQAGWRGYSQRKNFKLILVGFER, ILVGFERLQAIARSHLLMRQFQAMRQRIVQ, MRQRIVQLQARCRGYLVRQQVQAKRRAVVI, and KRRAVVIIQAHARGMVVRKSYWQQKSTGPQ. Ser-904 is subject to Phosphoserine. The interval 962–1578 is mediates interaction with ANKS4B; the sequence is EEEVDSLAEY…STQLLSLLAM (617 aa). In terms of domain architecture, MyTH4 1 spans 989 to 1189; the sequence is HIQKPLRYPL…PTWLELQAVK (201 aa). The region spanning 1194-1503 is the FERM 1 domain; the sequence is IPIQVILATG…GGLKERSVFA (310 aa). A Phosphothreonine modification is found at Thr-1339. Ser-1368 is subject to Phosphoserine. Residues 1497 to 2113 are mediates interaction with CDHR2, CDHR5 and USH1C; the sequence is KERSVFAMAL…GFRAPAPANP (617 aa). Residues 1498–1564 form the SH3 domain; that stretch reads ERSVFAMALQ…PTACLYTIPS (67 aa). 2 consecutive MyTH4 domains span residues 1641-1790 and 1790-1896; these read YSPE…KAAE and EQNV…LNVT. Ser-1642 bears the Phosphoserine mark. The FERM 2 domain occupies 1796–2099; it reads LHHEVYLPND…SYVQQLLNTV (304 aa).

It belongs to the TRAFAC class myosin-kinesin ATPase superfamily. Myosin family. As to quaternary structure, part of the IMAC/intermicrovillar adhesion complex/intermicrovillar tip-link complex composed of ANKS4B, MYO7B, USH1C, CDHR2 and CDHR5. Interacts with CDHR2. Interacts with CDHR5. Interacts with USH1C. Interacts with ANKS4B; requires initial interaction with USH1C. Interacts with CALML4; the interaction mediates the association of CALML4 with the IMAC/intermicrovillar adhesion complex. As to expression, expressed primarily in kidney and intestine. Detected in proximal tubule cells of the kidney and enterocytes of the intestine, specifically the distal tips of apical microvilli on these transporting epithelial cells (at protein level).

It is found in the cytoplasm. It localises to the cytoskeleton. The protein localises to the cell projection. Its subcellular location is the microvillus. Functionally, myosins are actin-based motor molecules with ATPase activity. Their highly divergent tails are presumed to bind to membranous compartments, which would be moved relative to actin filaments. As part of the intermicrovillar adhesion complex/IMAC plays a role in epithelial brush border differentiation, controlling microvilli organization and length. May link the complex to the actin core bundle of microvilli. The protein is Unconventional myosin-VIIb (Myo7b) of Mus musculus (Mouse).